We begin with the raw amino-acid sequence, 446 residues long: Histidine--tRNA ligase (446 aa).

The protein belongs to the class-II aminoacyl-tRNA synthetase family. In terms of assembly, homodimer.

It is found in the cytoplasm. The catalysed reaction is tRNA(His) + L-histidine + ATP = L-histidyl-tRNA(His) + AMP + diphosphate + H(+). The chain is Histidine--tRNA ligase from Burkholderia vietnamiensis (strain G4 / LMG 22486) (Burkholderia cepacia (strain R1808)).